The following is a 251-amino-acid chain: Triosephosphate isomerase (251 aa).

9 to 11 contributes to the substrate binding site; the sequence is NWK. Histidine 94 functions as the Electrophile in the catalytic mechanism. Glutamate 166 acts as the Proton acceptor in catalysis. Substrate is bound by residues glycine 172, serine 211, and 232–233; that span reads GG.

The protein belongs to the triosephosphate isomerase family. In terms of assembly, homodimer.

The protein localises to the cytoplasm. The catalysed reaction is D-glyceraldehyde 3-phosphate = dihydroxyacetone phosphate. It functions in the pathway carbohydrate biosynthesis; gluconeogenesis. The protein operates within carbohydrate degradation; glycolysis; D-glyceraldehyde 3-phosphate from glycerone phosphate: step 1/1. In terms of biological role, involved in the gluconeogenesis. Catalyzes stereospecifically the conversion of dihydroxyacetone phosphate (DHAP) to D-glyceraldehyde-3-phosphate (G3P). The chain is Triosephosphate isomerase from Xanthomonas euvesicatoria pv. vesicatoria (strain 85-10) (Xanthomonas campestris pv. vesicatoria).